The following is a 238-amino-acid chain: Deoxyribose-phosphate aldolase (238 aa).

Residue aspartate 102 is the Proton donor/acceptor of the active site. The Schiff-base intermediate with acetaldehyde role is filled by lysine 164. Catalysis depends on lysine 193, which acts as the Proton donor/acceptor.

It belongs to the DeoC/FbaB aldolase family. DeoC type 1 subfamily.

It localises to the cytoplasm. It catalyses the reaction 2-deoxy-D-ribose 5-phosphate = D-glyceraldehyde 3-phosphate + acetaldehyde. The protein operates within carbohydrate degradation; 2-deoxy-D-ribose 1-phosphate degradation; D-glyceraldehyde 3-phosphate and acetaldehyde from 2-deoxy-alpha-D-ribose 1-phosphate: step 2/2. Its function is as follows. Catalyzes a reversible aldol reaction between acetaldehyde and D-glyceraldehyde 3-phosphate to generate 2-deoxy-D-ribose 5-phosphate. In Rhodospirillum rubrum (strain ATCC 11170 / ATH 1.1.1 / DSM 467 / LMG 4362 / NCIMB 8255 / S1), this protein is Deoxyribose-phosphate aldolase.